The primary structure comprises 389 residues: Acetate kinase (389 aa).

A Mg(2+)-binding site is contributed by Asn-9. Residue Lys-16 coordinates ATP. Residue Arg-77 coordinates substrate. Asp-134 functions as the Proton donor/acceptor in the catalytic mechanism. ATP is bound by residues 194-198 (HLGNG), 268-270 (DFR), and 316-320 (GVGEN). A Mg(2+)-binding site is contributed by Glu-370.

The protein belongs to the acetokinase family. In terms of assembly, homodimer. It depends on Mg(2+) as a cofactor. Mn(2+) is required as a cofactor.

Its subcellular location is the cytoplasm. It carries out the reaction acetate + ATP = acetyl phosphate + ADP. Its pathway is metabolic intermediate biosynthesis; acetyl-CoA biosynthesis; acetyl-CoA from acetate: step 1/2. Functionally, catalyzes the formation of acetyl phosphate from acetate and ATP. Can also catalyze the reverse reaction. This Mycolicibacterium vanbaalenii (strain DSM 7251 / JCM 13017 / BCRC 16820 / KCTC 9966 / NRRL B-24157 / PYR-1) (Mycobacterium vanbaalenii) protein is Acetate kinase.